Here is a 140-residue protein sequence, read N- to C-terminus: General stress protein 26 (140 aa).

This Bacillus subtilis (strain 168) protein is General stress protein 26 (ydaG).